Reading from the N-terminus, the 105-residue chain is Malonate decarboxylase acyl carrier protein (105 aa).

Ser28 carries the post-translational modification O-(phosphoribosyl dephospho-coenzyme A)serine.

This sequence belongs to the MdcC family. Covalently binds the prosthetic group of malonate decarboxylase.

The protein localises to the cytoplasm. Its function is as follows. Subunit of malonate decarboxylase, it is an acyl carrier protein to which acetyl and malonyl thioester residues are bound via a 2'-(5''-phosphoribosyl)-3'-dephospho-CoA prosthetic group and turn over during the catalytic mechanism. This chain is Malonate decarboxylase acyl carrier protein, found in Xanthomonas axonopodis pv. citri (strain 306).